The following is a 142-amino-acid chain: Protein archease (142 aa).

Ca(2+) contacts are provided by aspartate 12, aspartate 141, and isoleucine 142.

This sequence belongs to the archease family. As to quaternary structure, in solution, exists as a monomer, trimer and hexamer. Oligomeric states form a tripartite complex with tRNA and PAB1947 methyltransferase.

Functionally, activates the tRNA-splicing ligase complex by facilitating the enzymatic turnover of catalytic subunit RtcB. Acts by promoting the guanylylation of RtcB, a key intermediate step in tRNA ligation. Can also alter the NTP specificity of RtcB such that ATP, dGTP or ITP is used efficiently. Chaperone or modulator of proteins involved in DNA or RNA processing. Protects the tRNA (cytosine-5-)-methyltransferase PAB1947 against aggregation and increases its specificity. The polypeptide is Protein archease (Pyrococcus abyssi (strain GE5 / Orsay)).